Consider the following 122-residue polypeptide: Small ribosomal subunit protein uS12 (122 aa).

The segment at methionine 1–leucine 24 is disordered. Residues isoleucine 8–threonine 20 show a composition bias toward basic residues. At aspartate 89 the chain carries 3-methylthioaspartic acid.

Belongs to the universal ribosomal protein uS12 family. In terms of assembly, part of the 30S ribosomal subunit. Contacts proteins S8 and S17. May interact with IF1 in the 30S initiation complex.

Its function is as follows. With S4 and S5 plays an important role in translational accuracy. Functionally, interacts with and stabilizes bases of the 16S rRNA that are involved in tRNA selection in the A site and with the mRNA backbone. Located at the interface of the 30S and 50S subunits, it traverses the body of the 30S subunit contacting proteins on the other side and probably holding the rRNA structure together. The combined cluster of proteins S8, S12 and S17 appears to hold together the shoulder and platform of the 30S subunit. This chain is Small ribosomal subunit protein uS12, found in Natranaerobius thermophilus (strain ATCC BAA-1301 / DSM 18059 / JW/NM-WN-LF).